The following is a 209-amino-acid chain: Orotate phosphoribosyltransferase (209 aa).

5-phospho-alpha-D-ribose 1-diphosphate contacts are provided by residues arginine 96, lysine 100, histidine 102, and glutamate 122–serine 130. Serine 126 is an orotate binding site.

It belongs to the purine/pyrimidine phosphoribosyltransferase family. PyrE subfamily. In terms of assembly, homodimer. Mg(2+) is required as a cofactor.

It catalyses the reaction orotidine 5'-phosphate + diphosphate = orotate + 5-phospho-alpha-D-ribose 1-diphosphate. Its pathway is pyrimidine metabolism; UMP biosynthesis via de novo pathway; UMP from orotate: step 1/2. In terms of biological role, catalyzes the transfer of a ribosyl phosphate group from 5-phosphoribose 1-diphosphate to orotate, leading to the formation of orotidine monophosphate (OMP). The sequence is that of Orotate phosphoribosyltransferase from Listeria monocytogenes serotype 4b (strain F2365).